A 257-amino-acid polypeptide reads, in one-letter code: Putative hydro-lyase YcsI (257 aa).

Belongs to the D-glutamate cyclase family.

The sequence is that of Putative hydro-lyase YcsI (ycsI) from Bacillus subtilis (strain 168).